Here is a 425-residue protein sequence, read N- to C-terminus: MRLSECYVPTMKDVSSDVVVASHKYSLRAGLVRQNASGLYTWLPLGLKVLRTIERIVREEMDSSGFLEILMPSVQPADLWRESLRYDSYGPEMLRMQDRSGREMVFGPTHEEAISDVVRSSLKSYRDLPINLYQIQWKFRDELRPRHGIMRGREFLMKDAYSFDVDFEGVMRSYENVFSAYFRIFRRLGLVPIAAKADSGAIGGSISHEFHVLVPTGESTVYHDKKALDLSKNDYCTTEEIASVYAATEDAHDPQNCGVDPNDLQVSKGIEVAHVFYLGDRYSAPMNVKFHDKDGNSAHALMGCYGIGISRLVAAIIEVFHDDVGIRWPESIAPFKVGIVNLLTTNEDCKTTAETIYAALADSSLYDDSTDSPGVKLARMDLLGMPWQVIIGNSFVKDKVVELKNRANGATERCTVDALIARMQA.

It belongs to the class-II aminoacyl-tRNA synthetase family. ProS type 2 subfamily. Homodimer.

Its subcellular location is the cytoplasm. The catalysed reaction is tRNA(Pro) + L-proline + ATP = L-prolyl-tRNA(Pro) + AMP + diphosphate. Its function is as follows. Catalyzes the attachment of proline to tRNA(Pro) in a two-step reaction: proline is first activated by ATP to form Pro-AMP and then transferred to the acceptor end of tRNA(Pro). The sequence is that of Proline--tRNA ligase from Anaplasma marginale (strain St. Maries).